Here is an 85-residue protein sequence, read N- to C-terminus: Granaticin polyketide synthase acyl carrier protein (85 aa).

The Carrier domain occupies 3 to 81; that stretch reads RLTLDGLRTI…VLLDLVNGAQ (79 aa). Ser-41 carries the O-(pantetheine 4'-phosphoryl)serine modification.

In terms of processing, 4'-phosphopantetheine is transferred from CoA to a specific serine of the apo-ACP-like protein.

The protein operates within antibiotic biosynthesis; granaticin biosynthesis. Functionally, acyl carrier protein. The polypeptide is Granaticin polyketide synthase acyl carrier protein (Streptomyces violaceoruber).